The chain runs to 71 residues: NAD(P)H-quinone oxidoreductase subunit O (71 aa).

Belongs to the complex I NdhO subunit family. As to quaternary structure, NDH-1 can be composed of about 15 different subunits; different subcomplexes with different compositions have been identified which probably have different functions.

The protein localises to the cellular thylakoid membrane. The enzyme catalyses a plastoquinone + NADH + (n+1) H(+)(in) = a plastoquinol + NAD(+) + n H(+)(out). It carries out the reaction a plastoquinone + NADPH + (n+1) H(+)(in) = a plastoquinol + NADP(+) + n H(+)(out). In terms of biological role, NDH-1 shuttles electrons from an unknown electron donor, via FMN and iron-sulfur (Fe-S) centers, to quinones in the respiratory and/or the photosynthetic chain. The immediate electron acceptor for the enzyme in this species is believed to be plastoquinone. Couples the redox reaction to proton translocation, and thus conserves the redox energy in a proton gradient. Cyanobacterial NDH-1 also plays a role in inorganic carbon-concentration. In Nostoc punctiforme (strain ATCC 29133 / PCC 73102), this protein is NAD(P)H-quinone oxidoreductase subunit O.